A 239-amino-acid polypeptide reads, in one-letter code: IkB-like protein (239 aa).

ANK repeat units lie at residues 48–77 (NKITVFMLICIYGRLDFLRFLFKQESYPGE), 87–116 (DGNSAWHYLAEKNNHLLLEEVLDYFGKNGI), 124–153 (NGVTPIMKAAMRGRTLSVLSLLKYGANPNR), and 158–187 (KGFTTWDWAVFTGHADLVKTLNKGYQKPLF). The Nuclear localization signal signature appears at 81-87 (HYRRDKD). The short motif at 203 to 214 (KKKPKIIITGCE) is the Nuclear localization signal element. The PxIxITxC motif; Interaction with host PPP3CA signature appears at 206–213 (PKIIITGC). Positions 228–231 (FLCV) match the FLCV motif motif.

This sequence belongs to the asfivirus A238L family. As to quaternary structure, interacts with host PPIA. Interacts with host PPP3CA/Calcineurin. Interacts with host RELA/p65; interaction of the 32 kDa form with host RELA results in the formation of a stable complex with NF-kappa-B. Interacts with host PPP3R1. Interacts with host EP300; this interaction inhibits the association of host EP300 with host RELA, JUN and NFATC2. Post-translationally, the protein exists in a 28 kDa and a 32 kDa form, probably due to post-translational modifications which are neither phosphorylation, nor sumoylation.

Its subcellular location is the host nucleus. It is found in the host cytoplasm. Functionally, ikB-like protein that inhibits the binding of NF-kappa-B to DNA, thereby downregulating pro-inflammatory cytokine production. Forms a heterodimer with the NF-kappa-B subunit RELA/p65 and prevents the activation of the NF-kappa-B transcription factor. Inhibits calcineurin function, which is required for the induction of nuclear factor of activated T cells (NFAT)-dependent immune response genes. Prevents the binding of substrates to calcineurin without affecting the phosphatase activity. Does not contain the serine residues that are phosphorylated by host IkB kinase and thus is not degraded following stimulation of the NFkB pathway. This Ornithodoros (relapsing fever ticks) protein is IkB-like protein (A238L).